The following is a 143-amino-acid chain: Large-conductance mechanosensitive channel (143 aa).

Transmembrane regions (helical) follow at residues Val21–Ile41, Val44–Val64, and Gly86–Val106.

The protein belongs to the MscL family. Homopentamer.

The protein resides in the cell inner membrane. Its function is as follows. Channel that opens in response to stretch forces in the membrane lipid bilayer. May participate in the regulation of osmotic pressure changes within the cell. The protein is Large-conductance mechanosensitive channel of Variovorax paradoxus (strain S110).